A 229-amino-acid chain; its full sequence is Probable septum site-determining protein MinC (229 aa).

The protein belongs to the MinC family. As to quaternary structure, interacts with MinD and FtsZ.

Cell division inhibitor that blocks the formation of polar Z ring septums. Rapidly oscillates between the poles of the cell to destabilize FtsZ filaments that have formed before they mature into polar Z rings. Prevents FtsZ polymerization. This chain is Probable septum site-determining protein MinC, found in Ruminiclostridium cellulolyticum (strain ATCC 35319 / DSM 5812 / JCM 6584 / H10) (Clostridium cellulolyticum).